Consider the following 307-residue polypeptide: Myeloid-associated differentiation marker-like protein 2 (307 aa).

MARVEL domains lie at 17–154 (AVTS…ARPG) and 159–303 (YMAT…RIRF). Transmembrane regions (helical) follow at residues 53–73 (FCMA…ACEF), 90–110 (AFAM…PLYF), 129–149 (LAAS…VALT), 163–183 (VSGL…GALV), 198–218 (VAVY…SVMG), 229–249 (RLVV…AVIW), and 278–298 (LVVA…LAYS).

Belongs to the MAL family.

It localises to the membrane. The polypeptide is Myeloid-associated differentiation marker-like protein 2 (MYADML2) (Homo sapiens (Human)).